We begin with the raw amino-acid sequence, 567 residues long: Geranylgeranyl transferase type-2 subunit alpha (567 aa).

PFTA repeat units follow at residues 44-78 (LDESVLELTSQILGANPDFATLWNCRREVLQQLET), 88-122 (LVKAELGFLESCLRVNPKSYGTWHHRCWLLSRLPE), 124-158 (NWARELELCARFLEADERNFHCWDYRRFVAAQAAV), 159-193 (APAEELAFTDSLITRNFSNYSSWHYRSCLLPQLHP), 207-241 (VLLRELELVQNAFFTDPNDQSAWFYHRWLLGRAEP), and 363-397 (VLQSELESCKELQELEPENKWCLLTIILLMRALDP). S98 carries the post-translational modification Phosphoserine. 5 LRR repeats span residues 442–463 (DVRVLHLAHKDLTVLCHLEQLL), 464–486 (LVTHLDLSHNRLRALPPALAALR), 487–508 (CLEVLQASDNVLENLDGVANLP), 509–530 (RLRELLLCNNRLQQSAALQTLA), and 534–555 (RLVFLNLQGNSLCQEEGIRERL).

Belongs to the protein prenyltransferase subunit alpha family. Heterotrimer composed of RABGGTA, RABGGTB and CHM; within this trimer, RABGGTA and RABGGTB form the catalytic component B, while CHM (component A) mediates peptide substrate binding. The Rab GGTase dimer (RGGT) interacts with CHM (component A) prior to Rab protein binding; the association is stabilized by geranylgeranyl pyrophosphate (GGpp). The CHM:RGGT:Rab complex is destabilized by GGpp. Interacts with non-phosphorylated form of RAB8A; phosphorylation of RAB8A at 'Thr-72' disrupts this interaction.

The enzyme catalyses geranylgeranyl diphosphate + L-cysteinyl-[protein] = S-geranylgeranyl-L-cysteinyl-[protein] + diphosphate. Its activity is regulated as follows. The enzymatic reaction requires the aid of a Rab escort protein (also called component A), such as CHM. Functionally, catalyzes the transfer of a geranylgeranyl moiety from geranylgeranyl diphosphate to both cysteines of Rab proteins with the C-terminal sequence -XXCC, -XCXC and -CCXX, such as RAB1A, RAB3A, RAB5A and RAB7A. The protein is Geranylgeranyl transferase type-2 subunit alpha (Rabggta) of Mus musculus (Mouse).